We begin with the raw amino-acid sequence, 175 residues long: uncharacterized protein (175 aa).

Helical transmembrane passes span 21-41 (IVLDFPSFLVGCVFTTMMGPI) and 50-70 (LVGLITVCKFLVIIGSIVFVI).

The protein resides in the membrane. This is an uncharacterized protein from Saccharomyces cerevisiae (strain ATCC 204508 / S288c) (Baker's yeast).